Reading from the N-terminus, the 183-residue chain is RNA 2',3'-cyclic phosphodiesterase (183 aa).

The active-site Proton donor is histidine 44. 2 short sequence motifs (HXTX) span residues histidine 44–leucine 47 and histidine 130–leucine 133. The Proton acceptor role is filled by histidine 130.

It belongs to the 2H phosphoesterase superfamily. ThpR family.

It carries out the reaction a 3'-end 2',3'-cyclophospho-ribonucleotide-RNA + H2O = a 3'-end 2'-phospho-ribonucleotide-RNA + H(+). Hydrolyzes RNA 2',3'-cyclic phosphodiester to an RNA 2'-phosphomonoester. The chain is RNA 2',3'-cyclic phosphodiesterase (ytlP) from Bacillus subtilis (strain 168).